A 176-amino-acid chain; its full sequence is Large ribosomal subunit protein eL6A (176 aa).

At serine 2 the chain carries N-acetylserine. A Phosphoserine modification is found at serine 12. Lysine 128 is covalently cross-linked (Glycyl lysine isopeptide (Lys-Gly) (interchain with G-Cter in ubiquitin)).

The protein belongs to the eukaryotic ribosomal protein eL6 family. Component of the large ribosomal subunit (LSU). Mature yeast ribosomes consist of a small (40S) and a large (60S) subunit. The 40S small subunit contains 1 molecule of ribosomal RNA (18S rRNA) and 33 different proteins (encoded by 57 genes). The large 60S subunit contains 3 rRNA molecules (25S, 5.8S and 5S rRNA) and 46 different proteins (encoded by 81 genes). N-terminally acetylated by acetyltransferase NatA.

It is found in the cytoplasm. Component of the ribosome, a large ribonucleoprotein complex responsible for the synthesis of proteins in the cell. The small ribosomal subunit (SSU) binds messenger RNAs (mRNAs) and translates the encoded message by selecting cognate aminoacyl-transfer RNA (tRNA) molecules. The large subunit (LSU) contains the ribosomal catalytic site termed the peptidyl transferase center (PTC), which catalyzes the formation of peptide bonds, thereby polymerizing the amino acids delivered by tRNAs into a polypeptide chain. The nascent polypeptides leave the ribosome through a tunnel in the LSU and interact with protein factors that function in enzymatic processing, targeting, and the membrane insertion of nascent chains at the exit of the ribosomal tunnel. This chain is Large ribosomal subunit protein eL6A, found in Saccharomyces cerevisiae (strain ATCC 204508 / S288c) (Baker's yeast).